A 316-amino-acid chain; its full sequence is MGLSSSKDIDLLVNFIENRQGATLALPWPEDYRLTLHSVENIPEISREDVQNWAKTYMCCGGELVVVGVIHKAKTRTCRGPIVLQGARGHIYVYNGFFDRSLYHVASSFHDLFSNGLRFFYPIYETCDYALDSTVALDMIAHSKSFSELLHYRNERKNAFFTLKTYPYKTFVRFCNLSMTEFSSRHLIQWRRKLQTSLLDVVFIVQHNFFGDWRELVVVFDGHGMLFCVDREESLLFIARNMSDFLKIGCLRYNENRRLHTQWFTQDTDYIKQVDEMFSRDVLCPLREHCQRSRRERGLLKICTSLVRGVNCIERG.

Belongs to the herpesviridae US22 family.

This is Protein U25 (U25) from Homo sapiens (Human).